We begin with the raw amino-acid sequence, 315 residues long: 10-epi-cubebol synthase (315 aa).

4 residues coordinate Mg(2+): Asp79, Asn220, Ser224, and Glu228. The DDXXD motif motif lies at 79–83 (DDVCE). The NXXXSXXXE motif signature appears at 220-228 (NDIYSLRKE).

This sequence belongs to the terpene synthase family. Mg(2+) serves as cofactor.

It catalyses the reaction (2E,6E)-farnesyl diphosphate + H2O = 10-epi-cubebol + diphosphate. In terms of biological role, catalyzes the cyclization of farnesyl diphosphate (FPP) to 10-epi-cubebol. Is also responsible for the formation of many other sesquiterpenes, mainly cadalanes and cubebanes, including 1,10-di-epi-cubebol and the cadalanes delta-cadinene, T-cadinol and alpha-cadinol. In Sorangium cellulosum (strain So ce56) (Polyangium cellulosum (strain So ce56)), this protein is 10-epi-cubebol synthase.